Here is a 196-residue protein sequence, read N- to C-terminus: Small ribosomal subunit protein uS4c (196 aa).

The interval 15–43 (LGALPGLTRKTPKSGSNQKKKFHSGKKEQ) is disordered. Residues 89–150 (MRLDNILFRL…NQRSKRLVQN (62 aa)) form the S4 RNA-binding domain.

It belongs to the universal ribosomal protein uS4 family. As to quaternary structure, part of the 30S ribosomal subunit. Contacts protein S5. The interaction surface between S4 and S5 is involved in control of translational fidelity.

It is found in the plastid. The protein resides in the chloroplast. Functionally, one of the primary rRNA binding proteins, it binds directly to 16S rRNA where it nucleates assembly of the body of the 30S subunit. Its function is as follows. With S5 and S12 plays an important role in translational accuracy. The sequence is that of Small ribosomal subunit protein uS4c (rps4) from Bothriochloa ischaemum (Yellow bluestem).